The chain runs to 621 residues: Cyclic nucleotide-gated ion channel 11 (621 aa).

Topologically, residues 1 to 43 (MNLQRRKFVRLDSTGVDGKLKSVRGRLKKVYGKMKTLENWRKT) are cytoplasmic. A helical transmembrane segment spans residues 44–64 (VLLACVVALAIDPLFLFIPLI). Residues 65 to 76 (DSQRFCFTFDKT) are Extracellular-facing. Residues 77–97 (LVAVVCVIRTFIDTFYVIHII) form a helical membrane-spanning segment. Topologically, residues 98–128 (YYLITETIAPRSQASLRGEIVVHSKATLKTR) are cytoplasmic. Residues 129-149 (LLFHFIVDIISVLPIPQVVVL) traverse the membrane as a helical segment. Over 150–162 (TLIPLSASLVSER) the chain is Extracellular. A helical transmembrane segment spans residues 163-183 (ILKWIILSQYVPRIIRMYPLY). Residues 184–198 (KEVTRAFGTVAESKR) lie on the Cytoplasmic side of the membrane. A helical transmembrane segment spans residues 199-219 (VGAALNFFLYMLHSYVCGAFW). At 220–329 (YLSSIERKST…QNLETSNSAG (110 aa)) the chain is on the extracellular side. Residues 330–350 (EIFFAIIICVSGLLLFAVLIG) form a helical membrane-spanning segment. At 351–621 (NVQKYLQSST…KLNLGAAIYA (271 aa)) the chain is on the cytoplasmic side. Residues 435–556 (LLQA…HSKQ) and aspartate 506 each bind a nucleoside 3',5'-cyclic phosphate. Residues 549–564 (YRRLHSKQLQHMFRFY) form a calmodulin-binding region. The IQ domain maps to 569–598 (QTWAACFIQAAWKRHCRRKLSKALREEEGK).

This sequence belongs to the cyclic nucleotide-gated cation channel (TC 1.A.1.5) family. In terms of assembly, homotetramer or heterotetramer.

It localises to the cell membrane. Functionally, putative cyclic nucleotide-gated ion channel. This Arabidopsis thaliana (Mouse-ear cress) protein is Cyclic nucleotide-gated ion channel 11 (CNGC11).